The chain runs to 106 residues: Urease subunit beta (106 aa).

Belongs to the urease beta subunit family. As to quaternary structure, heterotrimer of UreA (gamma), UreB (beta) and UreC (alpha) subunits. Three heterotrimers associate to form the active enzyme.

The protein localises to the cytoplasm. It carries out the reaction urea + 2 H2O + H(+) = hydrogencarbonate + 2 NH4(+). It participates in nitrogen metabolism; urea degradation; CO(2) and NH(3) from urea (urease route): step 1/1. This is Urease subunit beta from Synechococcus sp. (strain CC9311).